The primary structure comprises 612 residues: Threonine--tRNA ligase (612 aa).

The catalytic stretch occupies residues Asp218 to Pro509. Residues Cys310, His361, and His486 each contribute to the Zn(2+) site.

Belongs to the class-II aminoacyl-tRNA synthetase family. As to quaternary structure, homodimer. Zn(2+) serves as cofactor.

It localises to the cytoplasm. It carries out the reaction tRNA(Thr) + L-threonine + ATP = L-threonyl-tRNA(Thr) + AMP + diphosphate + H(+). Catalyzes the attachment of threonine to tRNA(Thr) in a two-step reaction: L-threonine is first activated by ATP to form Thr-AMP and then transferred to the acceptor end of tRNA(Thr). Also edits incorrectly charged L-seryl-tRNA(Thr). This is Threonine--tRNA ligase from Helicobacter pylori (strain P12).